The primary structure comprises 457 residues: tRNA-2-methylthio-N(6)-dimethylallyladenosine synthase (457 aa).

Positions 3 to 120 constitute an MTTase N-terminal domain; it reads KKVYIKTFGC…LPQMIDQRRA (118 aa). The [4Fe-4S] cluster site is built by cysteine 12, cysteine 49, cysteine 83, cysteine 157, cysteine 161, and cysteine 164. In terms of domain architecture, Radical SAM core spans 143 to 377; sequence RVEGPSAFVS…QATIEENVAR (235 aa). A TRAM domain is found at 380-447; it reads RSMVGKVERI…PHSLRGELLL (68 aa).

The protein belongs to the methylthiotransferase family. MiaB subfamily. Monomer. It depends on [4Fe-4S] cluster as a cofactor.

The protein resides in the cytoplasm. The catalysed reaction is N(6)-dimethylallyladenosine(37) in tRNA + (sulfur carrier)-SH + AH2 + 2 S-adenosyl-L-methionine = 2-methylsulfanyl-N(6)-dimethylallyladenosine(37) in tRNA + (sulfur carrier)-H + 5'-deoxyadenosine + L-methionine + A + S-adenosyl-L-homocysteine + 2 H(+). In terms of biological role, catalyzes the methylthiolation of N6-(dimethylallyl)adenosine (i(6)A), leading to the formation of 2-methylthio-N6-(dimethylallyl)adenosine (ms(2)i(6)A) at position 37 in tRNAs that read codons beginning with uridine. In Burkholderia ambifaria (strain MC40-6), this protein is tRNA-2-methylthio-N(6)-dimethylallyladenosine synthase.